The following is a 551-amino-acid chain: MAENWKNCFEEELICPICLHVFVEPVQLPCKHNFCRGCIGEAWAKDSGLVRCPECNQAYNQKPGLEKNLKLTNIVEKFNALHVEKPPAALHCVFCRRGPPLPAQKVCLRCEAPCCQSHVQTHLQQPSTARGHLLVEADDVRAWSCPQHNAYRLYHCEAEQVAVCQYCCYYSGAHQGHSVCDVEIRRNEIRKMLMKQQDRLEEREQDIEDQLYKLESDKRLVEEKVNQLKEEVRLQYEKLHQLLDEDLRQTVEVLDKAQAKFCSENAAQALHLGERMQEAKKLLGSLQLLFDKTEDVSFMKNTKSVKILMDRTQTCTSSSLSPTKIGHLNSKLFLNEVAKKEKQLRKMLEGPFSTPVPFLQSVPLYPCGVSSSGAEKRKHSTAFPEASFLETSSGPVGGQYGAAGTASGEGQSGQPLGPCSSTQHLVALPGGAQPVHSSPVFPPSQYPNGSAAQQPMLPQYGGRKILVCSVDNCYCSSVANHGGHQPYPRSGHFPWTVPSQEYSHPLPPTPSVPQSLPSLAVRDWLDASQQPGHQDFYRVYGQPSTKHYVTS.

The RING-type zinc finger occupies 15–56 (CPICLHVFVEPVQLPCKHNFCRGCIGEAWAKDSGLVRCPECN). B box-type zinc fingers lie at residues 92 to 132 (CVFC…ARGH) and 140 to 182 (VRAW…VCDV). Residues 181 to 249 (DVEIRRNEIR…HQLLDEDLRQ (69 aa)) adopt a coiled-coil conformation.

This sequence belongs to the TRIM/RBCC family. In terms of assembly, homodimer. Interacts with SOCS1 (via) SH2 domain and SOCS box. Interacts with HSP90AB1; prevents nucleus translocation of phosphorylated STAT3 and HSP90AB1. Interacts with MAP3K7/TAK1. Interacts with PIAS3. Interacts with TICAM1. Interacts with TRIM15; this interaction prevents TRIM8 cytoplasmic translocation. As to expression, widely expressed. Expressed in glomerular podocytes of kidneys.

The protein localises to the cytoplasm. It localises to the nucleus. The protein resides in the nuclear body. The catalysed reaction is S-ubiquitinyl-[E2 ubiquitin-conjugating enzyme]-L-cysteine + [acceptor protein]-L-lysine = [E2 ubiquitin-conjugating enzyme]-L-cysteine + N(6)-ubiquitinyl-[acceptor protein]-L-lysine.. It functions in the pathway protein modification; protein ubiquitination. Its function is as follows. E3 ubiquitin-protein ligase that participates in multiple biological processes including cell survival, differentiation, apoptosis, and in particular, the innate immune response. Participates in the activation of interferon-gamma signaling by promoting proteasomal degradation of the repressor SOCS1. Plays a positive role in the TNFalpha and IL-1beta signaling pathways. Mechanistically, induces the 'Lys-63'-linked polyubiquitination of MAP3K7/TAK1 component leading to the activation of NF-kappa-B. Also modulates STAT3 activity through negative regulation of PIAS3, either by degradation of PIAS3 through the ubiquitin-proteasome pathway or exclusion of PIAS3 from the nucleus. Negatively regulates TLR3/4-mediated innate immune response by catalyzing 'Lys-6'- and 'Lys-33'-linked polyubiquitination of TICAM1 and thereby disrupting the TICAM1-TBK1 interaction. This chain is E3 ubiquitin-protein ligase TRIM8 (TRIM8), found in Homo sapiens (Human).